The following is a 179-amino-acid chain: Large ribosomal subunit protein uL10 (179 aa).

It belongs to the universal ribosomal protein uL10 family. Part of the ribosomal stalk of the 50S ribosomal subunit. The N-terminus interacts with L11 and the large rRNA to form the base of the stalk. The C-terminus forms an elongated spine to which L12 dimers bind in a sequential fashion forming a multimeric L10(L12)X complex.

Functionally, forms part of the ribosomal stalk, playing a central role in the interaction of the ribosome with GTP-bound translation factors. This Polynucleobacter necessarius subsp. necessarius (strain STIR1) protein is Large ribosomal subunit protein uL10.